The primary structure comprises 281 residues: Protein ZAR1-like 1.L (281 aa).

A 3CxxC-type zinc finger spans residues 183–267 (QKYGFFHCKN…QELCGRCKGQ (85 aa)).

This sequence belongs to the ZAR1 family. In terms of assembly, component of a cytoplasmic ribonucleoprotein complex together with eif4enif1/4E-T and cpeb1. In terms of tissue distribution, expressed in oocytes.

The protein resides in the cytoplasm. It is found in the cytoplasmic ribonucleoprotein granule. MRNA-binding protein required for maternal mRNA storage, translation and degradation during oocyte maturation. Controls timing of meiosis during oogenesis. Probably promotes formation of some phase-separated membraneless compartment that stores maternal mRNAs in oocytes: acts by undergoing liquid-liquid phase separation upon binding to maternal mRNAs. Binds to the 3'-UTR of maternal mRNAs, inhibiting their translation. The protein is Protein ZAR1-like 1.L of Xenopus laevis (African clawed frog).